Here is a 349-residue protein sequence, read N- to C-terminus: MGCFNSKEAGAGRPKTTTQQQQQATPEPTVTTAEVRADEKISMDQDISQGNVEDFYVVGKELGRGAFSVVREGTRKTTSDKVALKYIEKKFVKKKHIEQLRREIDIMKKVKHENVLSLKEIFESDSHLTLVMELVTGGELFYKIVERGSFTEKGARNVVRQVCAGVEYLHSQGIAHRDLKPENLLCNGEGEDMTIKIADFGLSKIFGTGEALETSCGTPDYVAPEVLTGGSYDNAVDMWSIGVITYILLCGFPPFYASSQNLLFEKILTADYDFPEPEWTHVSEHAKAFIRNLIVKDPDQRHTAKQCLDDLWLSGSDQSIGSAADLHSHFAEKMKKYNDQRRGGQSSNN.

Residues 1–33 form a disordered region; the sequence is MGCFNSKEAGAGRPKTTTQQQQQATPEPTVTTA. Residues 16–33 show a composition bias toward low complexity; the sequence is TTTQQQQQATPEPTVTTA. In terms of domain architecture, Protein kinase spans 56-313; it reads YVVGKELGRG…AKQCLDDLWL (258 aa). Residues 62 to 70 and Lys-85 each bind ATP; that span reads LGRGAFSVV. The active-site Proton acceptor is Asp-178.

Belongs to the protein kinase superfamily. CAMK Ser/Thr protein kinase family. CaMK subfamily.

It catalyses the reaction L-seryl-[myosin light chain] + ATP = O-phospho-L-seryl-[myosin light chain] + ADP + H(+). The catalysed reaction is L-threonyl-[myosin light chain] + ATP = O-phospho-L-threonyl-[myosin light chain] + ADP + H(+). With respect to regulation, does not have a calmodulin-binding domain. In terms of biological role, may phosphorylate a specific serine in the N-terminus of a myosin light chain. The polypeptide is Probable myosin light chain kinase DDB_G0275057 (Dictyostelium discoideum (Social amoeba)).